The primary structure comprises 467 residues: NALCN channel auxiliary factor 1 (467 aa).

The helical transmembrane segment at 40-60 threads the bilayer; sequence LSLASLLFFTVLLSDHLWFCA. A disordered region spans residues 121-161; it reads MGESSPAAQAHRLLSASSSPTLPPSPGGGGGSKGNRGKNNR. N-linked (GlcNAc...) asparagine glycans are attached at residues N160, N226, and N254. Cystine bridges form between C200–C270, C235–C322, C255–C270, C313–C350, C333–C386, C339–C385, and C343–C370. Basic and acidic residues predominate over residues 390–408; the sequence is SEEQTAPRPKGTVDRRDSC. The interval 390-409 is disordered; that stretch reads SEEQTAPRPKGTVDRRDSCP. The helical transmembrane segment at 426 to 446 threads the bilayer; that stretch reads LKLCVLVLILLHTVLTASAAQ. An N-linked (GlcNAc...) asparagine glycan is attached at N462.

It belongs to the NALF family. As to quaternary structure, component of the NALCN channel complex. NALCN complex consists of NALCN and auxiliary subunits, UNC79, UNC80 and NACL1. These auxiliary subunits are essential for the NALCN channel function.

Its subcellular location is the cell membrane. In terms of biological role, auxillary component of the NALCN sodium channel complex, a channel that regulates the resting membrane potential and controls neuronal excitability. In Mus musculus (Mouse), this protein is NALCN channel auxiliary factor 1.